The chain runs to 586 residues: Glutamine--tRNA ligase (586 aa).

Positions 58-68 (PEPNGYLHIGH) match the 'HIGH' region motif. Residues 59 to 61 (EPN) and 65 to 71 (HIGHAKS) each bind ATP. Residues Asp91 and Tyr240 each contribute to the L-glutamine site. Residues Thr259 and 294–295 (RL) contribute to the ATP site. The 'KMSKS' region motif lies at 301–305 (VTSKR).

This sequence belongs to the class-I aminoacyl-tRNA synthetase family. In terms of assembly, monomer.

The protein resides in the cytoplasm. The enzyme catalyses tRNA(Gln) + L-glutamine + ATP = L-glutaminyl-tRNA(Gln) + AMP + diphosphate. The protein is Glutamine--tRNA ligase of Bordetella avium (strain 197N).